The sequence spans 473 residues: Chromosomal replication initiator protein DnaA (473 aa).

The segment at 1 to 87 is domain I, interacts with DnaA modulators; the sequence is MADGEESISV…LAVTTFAIVV (87 aa). Residues 87–132 are domain II; that stretch reads VNPEIQQESLSTVGEPEPTPAPYLDVATFTVAPPAEITAPPRNGDT. Positions 133 to 349 are domain III, AAA+ region; it reads RLNSKYSFDN…GTLIRVTAFA (217 aa). ATP is bound by residues G177, G179, K180, and T181. The interval 350-473 is domain IV, binds dsDNA; that stretch reads SLNRTPVDMP…LTSRIKQNHR (124 aa).

Belongs to the DnaA family. In terms of assembly, oligomerizes as a right-handed, spiral filament on DNA at oriC.

Its subcellular location is the cytoplasm. Functionally, plays an essential role in the initiation and regulation of chromosomal replication. ATP-DnaA binds to the origin of replication (oriC) to initiate formation of the DNA replication initiation complex once per cell cycle. Binds the DnaA box (a 9 base pair repeat at the origin) and separates the double-stranded (ds)DNA. Forms a right-handed helical filament on oriC DNA; dsDNA binds to the exterior of the filament while single-stranded (ss)DNA is stabiized in the filament's interior. The ATP-DnaA-oriC complex binds and stabilizes one strand of the AT-rich DNA unwinding element (DUE), permitting loading of DNA polymerase. After initiation quickly degrades to an ADP-DnaA complex that is not apt for DNA replication. Binds acidic phospholipids. This chain is Chromosomal replication initiator protein DnaA, found in Leifsonia xyli subsp. xyli (strain CTCB07).